Reading from the N-terminus, the 95-residue chain is Large ribosomal subunit protein uL23 (95 aa).

It belongs to the universal ribosomal protein uL23 family. In terms of assembly, part of the 50S ribosomal subunit. Contacts protein L29 and trigger factor when it is bound to the ribosome.

Functionally, one of the early assembly protein it binds 23S rRNA. One of the proteins that surrounds the polypeptide exit tunnel on the outside of the subunit. Forms the main docking site for trigger factor binding to the ribosome. This chain is Large ribosomal subunit protein uL23, found in Deinococcus radiodurans (strain ATCC 13939 / DSM 20539 / JCM 16871 / CCUG 27074 / LMG 4051 / NBRC 15346 / NCIMB 9279 / VKM B-1422 / R1).